Reading from the N-terminus, the 345-residue chain is Galacturonate transporter (345 aa).

The first 32 residues, 1–32 (MFKIKGLRWYMIGLVTIGTVLGYLTRNAIAAA), serve as a signal peptide directing secretion. Transmembrane regions (helical) follow at residues 49–69 (YIIA…GYVL), 76–96 (VGYA…ALAN), 100–120 (GLAV…PAGL), 139–159 (FNVG…WAIM), 165–185 (MAFL…LYFY), 237–257 (FLAE…MFKA), 265–285 (IAMF…LGGY), and 304–324 (LVVT…LFTS).

This sequence belongs to the major facilitator superfamily. Phthalate permease family.

The protein localises to the cell inner membrane. It carries out the reaction aldehydo-D-galacturonate(out) + H(+)(out) = aldehydo-D-galacturonate(in) + H(+)(in). Inhibited by cyanide and 2,4-dinitrophenol, but not by arsenate. Its function is as follows. Transport of D-galacturonate. Cannot transport the dimer digalacturonic acid. Uptake is an active process. The polypeptide is Galacturonate transporter (Dickeya chrysanthemi (Pectobacterium chrysanthemi)).